The following is an 885-amino-acid chain: Translation initiation factor IF-2 (885 aa).

Residues 1-295 form a disordered region; that stretch reads MTDNKDDKTI…EKFKRSQMQE (295 aa). The segment covering 63–77 has biased composition (low complexity); sequence PVAAAPAAARPAEQR. Pro residues predominate over residues 78–94; it reads PMPPQPSGRPAPQPQPH. The segment covering 130–183 has biased composition (basic and acidic residues); it reads RDAEEAKRRAEEEVRRRREEEERIAREKEEAARRAAEEAARPAVEAEKVEEKVE. A compositionally biased stretch (low complexity) spans 184–201; that stretch reads AATPAVAETRPLSERPAP. In terms of domain architecture, tr-type G spans 383 to 550; that stretch reads ARPPIVTIMG…AILLQSEILD (168 aa). Residues 392–399 form a G1 region; sequence GHVDHGKT. 392–399 is a binding site for GTP; the sequence is GHVDHGKT. Residues 417-421 are G2; it reads GITQH. Residues 438 to 441 form a G3 region; that stretch reads DTPG. Residues 438 to 442 and 492 to 495 each bind GTP; these read DTPGH and NKID. Residues 492-495 are G4; sequence NKID. The interval 528–530 is G5; sequence SAK.

Belongs to the TRAFAC class translation factor GTPase superfamily. Classic translation factor GTPase family. IF-2 subfamily.

The protein localises to the cytoplasm. One of the essential components for the initiation of protein synthesis. Protects formylmethionyl-tRNA from spontaneous hydrolysis and promotes its binding to the 30S ribosomal subunits. Also involved in the hydrolysis of GTP during the formation of the 70S ribosomal complex. The protein is Translation initiation factor IF-2 of Sinorhizobium medicae (strain WSM419) (Ensifer medicae).